Reading from the N-terminus, the 348-residue chain is Dihydroorotase (348 aa).

2 residues coordinate Zn(2+): His17 and His19. Residues 19-21 and Asn45 contribute to the substrate site; that span reads HLR. 3 residues coordinate Zn(2+): Lys103, His140, and His178. Residue Lys103 is modified to N6-carboxylysine. Residue His140 coordinates substrate. Leu223 is a binding site for substrate. Asp251 is a Zn(2+) binding site. Residue Asp251 is part of the active site. The substrate site is built by His255 and Ala267.

Belongs to the metallo-dependent hydrolases superfamily. DHOase family. Class II DHOase subfamily. In terms of assembly, homodimer. Zn(2+) serves as cofactor.

It carries out the reaction (S)-dihydroorotate + H2O = N-carbamoyl-L-aspartate + H(+). It functions in the pathway pyrimidine metabolism; UMP biosynthesis via de novo pathway; (S)-dihydroorotate from bicarbonate: step 3/3. Its function is as follows. Catalyzes the reversible cyclization of carbamoyl aspartate to dihydroorotate. The chain is Dihydroorotase from Salmonella dublin (strain CT_02021853).